A 526-amino-acid chain; its full sequence is Probable feruloyl esterase B-2 (526 aa).

The N-terminal stretch at 1–18 (MTKLSLLPLLTLASAVLA) is a signal peptide. 2 disulfide bridges follow: Cys-27–Cys-74 and Cys-62–Cys-113. Asn-52 carries N-linked (GlcNAc...) asparagine glycosylation. N-linked (GlcNAc...) asparagine glycosylation is present at Asn-137. 4 cysteine pairs are disulfide-bonded: Cys-186/Cys-441, Cys-255/Cys-272, Cys-281/Cys-291, and Cys-503/Cys-525. Residue Ser-187 is the Acyl-ester intermediate of the active site. The N-linked (GlcNAc...) asparagine glycan is linked to Asn-233. Ca(2+) contacts are provided by Asp-256, Asp-259, Ala-261, Asp-263, and Ile-265. Active-site charge relay system residues include Asp-400 and His-440. Asn-516 carries N-linked (GlcNAc...) asparagine glycosylation.

Belongs to the tannase family.

The protein localises to the secreted. It carries out the reaction feruloyl-polysaccharide + H2O = ferulate + polysaccharide.. Involved in degradation of plant cell walls. Hydrolyzes the feruloyl-arabinose ester bond in arabinoxylans as well as the feruloyl-galactose and feruloyl-arabinose ester bonds in pectin. The polypeptide is Probable feruloyl esterase B-2 (faeB-2) (Aspergillus fumigatus (strain ATCC MYA-4609 / CBS 101355 / FGSC A1100 / Af293) (Neosartorya fumigata)).